A 345-amino-acid chain; its full sequence is Histidinol-phosphate aminotransferase (345 aa).

Lysine 206 is subject to N6-(pyridoxal phosphate)lysine.

The protein belongs to the class-II pyridoxal-phosphate-dependent aminotransferase family. Histidinol-phosphate aminotransferase subfamily. In terms of assembly, homodimer. Pyridoxal 5'-phosphate serves as cofactor.

It carries out the reaction L-histidinol phosphate + 2-oxoglutarate = 3-(imidazol-4-yl)-2-oxopropyl phosphate + L-glutamate. It participates in amino-acid biosynthesis; L-histidine biosynthesis; L-histidine from 5-phospho-alpha-D-ribose 1-diphosphate: step 7/9. This is Histidinol-phosphate aminotransferase from Bacteroides fragilis (strain YCH46).